The sequence spans 275 residues: Catechol 1,2-dioxygenase 2 (275 aa).

4 residues coordinate Fe cation: Y158, Y192, H216, and H218.

Belongs to the intradiol ring-cleavage dioxygenase family. In terms of assembly, homodimer. It depends on Fe(3+) as a cofactor.

The catalysed reaction is catechol + O2 = cis,cis-muconate + 2 H(+). The protein operates within aromatic compound metabolism; beta-ketoadipate pathway; 5-oxo-4,5-dihydro-2-furylacetate from catechol: step 1/3. Its function is as follows. Can cleave 4-methyl-, 4-chloro-, and 3-methoxycatechol at lower rates than catechol, but has no activity with 4-nitrocatechol or protocatechuic acid. In Acinetobacter lwoffii, this protein is Catechol 1,2-dioxygenase 2 (catA2).